The following is a 686-amino-acid chain: MENIVITNTSGGGGGGVPSSSTDPPNNTTTTTATASAIDLNMSLSPFLSSPSLSSPSIQSAKKKTIEDFIIGKVLGEGSYGAVVLGTEKETQQQYAIKILEKKQIIKENKIKYVQIEKEIFCKSNHPNIVKLFFTFRSEQCLYYVLELCSQGDLLHQIKKVGSFDYRSCQYYVAEIISGLEHLHSLGIVHRDLKPENILMSSDLHVKITDFGTGKILPPPQSSQQQQQQQQQQQQLPTNSSGNLSSLLNNVNNLSVSTDLTQQQQNRTSSVDSASTTDSMISPNLQPTTTTTNNNNNNNNNNNNNNNNTAAGSNTNTNTNTNINTNINANINNIKTTEIPKLTRNNSFVGTAEYVSPELISNKETSTDSDLWALGCIIYQMASGRVPFRGKTEFLTFQKVSNRELVYPINMNPVIKDLVEKLLVIKPTDRLGSSSTPGGFDNLKAHPFFQDFNWSSLSNMSHPPPPIQPPQEKIIFDGDELFSPSLDCTTPRNNNVDENHQQNSCNNNNNNNNNINNINNNNNSSSNNISNSNSNSNSSNNLNISNGNLSTPRSSSSSSSQQPTQRSGSSGGSRDGGSSSNNISKWLNNGENVIYQGLVWKRKGFSIKKRQLILTDTPRLIYIDPKKMELKGEIPWSDSIKPKLKSNNNFVIKTPKRKYLLEDVAHNPQKWVDSIKSVILSSGSSN.

The segment at 1–31 (MENIVITNTSGGGGGGVPSSSTDPPNNTTTT) is disordered. The segment covering 18–31 (PSSSTDPPNNTTTT) has biased composition (low complexity). In terms of domain architecture, Protein kinase spans 69–449 (FIIGKVLGEG…FDNLKAHPFF (381 aa)). Residues 79 to 81 (SYG) and K98 contribute to the ATP site. Residues 100–144 (LEKKQIIKENKIKYVQIEKEIFCKSNHPNIVKLFFTFRSEQCLYY) are PIF-pocket. ATP is bound by residues 147-149 (ELC) and D153. D192 serves as the catalytic Proton acceptor. ATP contacts are provided by E196 and D210. Disordered stretches follow at residues 211–321 (FGTG…NTNT) and 481–584 (LFSP…NNIS). Residues 222 to 257 (SSQQQQQQQQQQQQLPTNSSGNLSSLLNNVNNLSVS) show a composition bias toward low complexity. Over residues 258-267 (TDLTQQQQNR) the composition is skewed to polar residues. Low complexity-rich tracts occupy residues 268 to 279 (TSSVDSASTTDS), 288 to 321 (TTTT…NTNT), and 503 to 568 (NSCN…QRSG). The PH domain maps to 593–682 (VIYQGLVWKR…DSIKSVILSS (90 aa)).

It belongs to the protein kinase superfamily. AGC Ser/Thr protein kinase family. PDPK1 subfamily.

It catalyses the reaction L-seryl-[protein] + ATP = O-phospho-L-seryl-[protein] + ADP + H(+). The catalysed reaction is L-threonyl-[protein] + ATP = O-phospho-L-threonyl-[protein] + ADP + H(+). The polypeptide is Probable serine/threonine-protein kinase pdkA (pdkA) (Dictyostelium discoideum (Social amoeba)).